We begin with the raw amino-acid sequence, 189 residues long: Putative ankyrin repeat protein TV1425 (189 aa).

4 ANK repeats span residues 31 to 60, 64 to 93, 97 to 126, and 130 to 159; these read YNRTPLMVACMLGMENAIDKLVENFDKLED, EGSTALIWAVKNNRLGIAEKLLSKGSNVNT, SGKTPLMWSIIFGYSEMSYFLLEHGANVND, and EGETPLIVASKYGRSEIVKKLLELGADISA.

This is Putative ankyrin repeat protein TV1425 from Thermoplasma volcanium (strain ATCC 51530 / DSM 4299 / JCM 9571 / NBRC 15438 / GSS1).